A 258-amino-acid chain; its full sequence is Small ribosomal subunit protein uS2 (258 aa).

Belongs to the universal ribosomal protein uS2 family.

In Streptococcus suis (strain 98HAH33), this protein is Small ribosomal subunit protein uS2.